We begin with the raw amino-acid sequence, 189 residues long: Recombination protein RecR (189 aa).

The C4-type zinc-finger motif lies at 48-63 (CQTCFHLSAEPTCEIC). The region spanning 71-165 (GMLCVVADSR…EVSRIAYGLP (95 aa)) is the Toprim domain.

This sequence belongs to the RecR family.

Its function is as follows. May play a role in DNA repair. It seems to be involved in an RecBC-independent recombinational process of DNA repair. It may act with RecF and RecO. The sequence is that of Recombination protein RecR from Synechococcus sp. (strain CC9311).